The chain runs to 266 residues: Undecaprenyl-diphosphatase (266 aa).

Transmembrane regions (helical) follow at residues 1 to 21, 39 to 59, 87 to 107, 111 to 131, 149 to 169, 183 to 203, 218 to 238, and 246 to 266; these read MDTF…FLPI, QGLS…VIYF, WWII…KDFI, LRSA…LWWA, ALLI…RSGA, AAAR…AILV, ALTL…HYFL, and MTPF…FIFL.

This sequence belongs to the UppP family.

The protein resides in the cell inner membrane. It carries out the reaction di-trans,octa-cis-undecaprenyl diphosphate + H2O = di-trans,octa-cis-undecaprenyl phosphate + phosphate + H(+). In terms of biological role, catalyzes the dephosphorylation of undecaprenyl diphosphate (UPP). Confers resistance to bacitracin. This Shewanella sp. (strain MR-7) protein is Undecaprenyl-diphosphatase.